The primary structure comprises 1291 residues: DNA-directed RNA polymerase subunit beta' (1291 aa).

Positions 60, 62, 75, and 78 each coordinate Zn(2+). Residues D535, D537, and D539 each coordinate Mg(2+). Residues C878, C954, C961, and C964 each coordinate Zn(2+).

The protein belongs to the RNA polymerase beta' chain family. In terms of assembly, the RNAP catalytic core consists of 2 alpha, 1 beta, 1 beta' and 1 omega subunit. When a sigma factor is associated with the core the holoenzyme is formed, which can initiate transcription. It depends on Mg(2+) as a cofactor. The cofactor is Zn(2+).

The enzyme catalyses RNA(n) + a ribonucleoside 5'-triphosphate = RNA(n+1) + diphosphate. DNA-dependent RNA polymerase catalyzes the transcription of DNA into RNA using the four ribonucleoside triphosphates as substrates. This is DNA-directed RNA polymerase subunit beta' from Thermobifida fusca (strain YX).